The primary structure comprises 101 residues: Small ribosomal subunit protein uS14 (101 aa).

The protein belongs to the universal ribosomal protein uS14 family. Part of the 30S ribosomal subunit. Contacts proteins S3 and S10.

In terms of biological role, binds 16S rRNA, required for the assembly of 30S particles and may also be responsible for determining the conformation of the 16S rRNA at the A site. The protein is Small ribosomal subunit protein uS14 of Delftia acidovorans (strain DSM 14801 / SPH-1).